Reading from the N-terminus, the 548-residue chain is Acetylcholine receptor subunit alpha-type des-2 (548 aa).

Positions 1–19 are cleaved as a signal peptide; the sequence is MLIIIQSLLLATTASLCIA. Residues 21–239 are Extracellular-facing; the sequence is TPVPTQIRLV…LTLYLRRKPL (219 aa). Asn52, Asn96, and Asn224 each carry an N-linked (GlcNAc...) asparagine glycan. The next 3 membrane-spanning stretches (helical) occupy residues 240–260, 274–294, and 301–321; these read FYLV…IVGF, VSLG…VSDQ, and FIPL…LGTV. The segment at 422-460 is disordered; sequence LIHLSPTAHQPDESISPSAPPVPSSSPLPPPLTPGPADD. A compositionally biased stretch (pro residues) spans 439-455; the sequence is SAPPVPSSSPLPPPLTP. A helical membrane pass occupies residues 517 to 537; sequence FVIFVVAFLIITFGINFIGFI. Topologically, residues 538–548 are cytoplasmic; it reads HWHQAGVEYGG.

It belongs to the ligand-gated ion channel (TC 1.A.9) family. Acetylcholine receptor (TC 1.A.9.1) subfamily. As to quaternary structure, the functional receptor is a heteromer of deg-3 and des-2. Interacts with ric-3; which is required for proper receptor folding.

The protein resides in the cell membrane. Functionally, subunit of the non-synaptic neuronal acetylcholine receptor (AChR), which may play a role in chemotaxis towards choline. After binding choline or acetylcholine, the AChR responds by an extensive change in conformation that affects all subunits and leads to opening of an ion-conducting channel across the plasma membrane. This is Acetylcholine receptor subunit alpha-type des-2 (des-2) from Caenorhabditis elegans.